Here is a 156-residue protein sequence, read N- to C-terminus: Small ribosomal subunit protein uS7 (156 aa).

Belongs to the universal ribosomal protein uS7 family. Part of the 30S ribosomal subunit. Contacts proteins S9 and S11.

Functionally, one of the primary rRNA binding proteins, it binds directly to 16S rRNA where it nucleates assembly of the head domain of the 30S subunit. Is located at the subunit interface close to the decoding center, probably blocks exit of the E-site tRNA. The chain is Small ribosomal subunit protein uS7 from Buchnera aphidicola subsp. Cinara cedri (strain Cc).